Here is a 375-residue protein sequence, read N- to C-terminus: Queuine tRNA-ribosyltransferase (375 aa).

The active-site Proton acceptor is the Asp-89. Residues 89 to 93 (DSGGF), Asp-143, Gln-187, and Gly-214 each bind substrate. The tract at residues 245 to 251 (GVGKPED) is RNA binding. The Nucleophile role is filled by Asp-264. The segment at 269–273 (TRNAR) is RNA binding; important for wobble base 34 recognition. Residues Cys-302, Cys-304, Cys-307, and His-333 each contribute to the Zn(2+) site.

Belongs to the queuine tRNA-ribosyltransferase family. Homodimer. Within each dimer, one monomer is responsible for RNA recognition and catalysis, while the other monomer binds to the replacement base PreQ1. Zn(2+) serves as cofactor.

The enzyme catalyses 7-aminomethyl-7-carbaguanine + guanosine(34) in tRNA = 7-aminomethyl-7-carbaguanosine(34) in tRNA + guanine. It functions in the pathway tRNA modification; tRNA-queuosine biosynthesis. In terms of biological role, catalyzes the base-exchange of a guanine (G) residue with the queuine precursor 7-aminomethyl-7-deazaguanine (PreQ1) at position 34 (anticodon wobble position) in tRNAs with GU(N) anticodons (tRNA-Asp, -Asn, -His and -Tyr). Catalysis occurs through a double-displacement mechanism. The nucleophile active site attacks the C1' of nucleotide 34 to detach the guanine base from the RNA, forming a covalent enzyme-RNA intermediate. The proton acceptor active site deprotonates the incoming PreQ1, allowing a nucleophilic attack on the C1' of the ribose to form the product. After dissociation, two additional enzymatic reactions on the tRNA convert PreQ1 to queuine (Q), resulting in the hypermodified nucleoside queuosine (7-(((4,5-cis-dihydroxy-2-cyclopenten-1-yl)amino)methyl)-7-deazaguanosine). This chain is Queuine tRNA-ribosyltransferase, found in Citrobacter koseri (strain ATCC BAA-895 / CDC 4225-83 / SGSC4696).